The chain runs to 539 residues: Protein ENTREP2 (539 aa).

4 helical membrane passes run 31-51 (IVLA…AVSF), 65-85 (SCPF…VVSW), 89-109 (LSLV…LNLA), and 176-196 (LLFS…LATA). Positions 301 to 481 (VVGQPPASQV…TSKERPRSLV (181 aa)) are disordered. Residues 306–331 (PASQVTSIGQQVAESSSGDPNTSAGF) show a composition bias toward polar residues. The span at 347 to 365 (GTATPGSSPSPDGPVGAPA) shows a compositional bias: low complexity. The span at 395–408 (SRSTSDPTLCTSSM) shows a compositional bias: polar residues.

Belongs to the ENTREP family.

The protein resides in the membrane. The sequence is that of Protein ENTREP2 from Homo sapiens (Human).